A 138-amino-acid polypeptide reads, in one-letter code: Transcription antitermination protein NusB (138 aa).

This sequence belongs to the NusB family.

Its function is as follows. Involved in transcription antitermination. Required for transcription of ribosomal RNA (rRNA) genes. Binds specifically to the boxA antiterminator sequence of the ribosomal RNA (rrn) operons. The protein is Transcription antitermination protein NusB of Helicobacter acinonychis (strain Sheeba).